The primary structure comprises 224 residues: Envelope glycoprotein L (224 aa).

The first 16 residues, 1–16 (MGFVCLFGLVVMGAWG), serve as a signal peptide directing secretion. Positions 20-161 (GSQATEYVLR…FDYSRTRRCV (142 aa)) are interaction with gH. One can recognise a gL alphaherpesvirus-type domain in the interval 23–201 (ATEYVLRSVI…LATQPPVLAL (179 aa)). 2 disulfides stabilise this stretch: Cys-44-Cys-76 and Cys-149-Cys-160. Residues 168 to 224 (PANTTSTWEPPVSSDDEASSQSKPLATQPPVLALSNAPPRRVSPTRGRRRHTRLRRN) are disordered. Residues 213–224 (RGRRRHTRLRRN) show a composition bias toward basic residues.

This sequence belongs to the herpesviridae glycoprotein L (gL) family. Alphaherpesvirinae gL subfamily. As to quaternary structure, interacts with glycoprotein H (gH); this interaction is necessary for the correct processing and cell surface expression of gH. The heterodimer gH/gL seems to interact with gB trimers during fusion.

It localises to the virion membrane. It is found in the host cell membrane. The protein localises to the host Golgi apparatus. The protein resides in the host trans-Golgi network. The heterodimer glycoprotein H-glycoprotein L is required for the fusion of viral and plasma membranes leading to virus entry into the host cell. Acts as a functional inhibitor of gH and maintains gH in an inhibited form. Upon binding to host integrins, gL dissociates from gH leading to activation of the viral fusion glycoproteins gB and gH. In Homo sapiens (Human), this protein is Envelope glycoprotein L.